The following is a 972-amino-acid chain: Coatomer subunit beta (972 aa).

HEAT repeat units follow at residues 79–113 (LLYFYWEIVPKLDQDGKLRHEMILVCNAIQHDLQH), 133–170 (ELLEQMVPSTLACLEYRHAYVRKYAILAVLSIYKVSEH), 317–354 (GCLEELTLDILRVLNAEDIDVRSKALTIAMDLVTSRNI), 397–434 (EIAANIVSLLLDFITDLNSVAANGVIAFVKDVVELYPQ), and 481–518 (RQSIGEIPILQTELKNQRKSQDEDDEATEESATKQAGP). The tract at residues 494–522 (LKNQRKSQDEDDEATEESATKQAGPVILP) is disordered.

As to quaternary structure, oligomeric complex that consists of at least the alpha, beta, beta', gamma, delta, epsilon and zeta subunits.

It localises to the cytoplasm. It is found in the golgi apparatus membrane. The protein localises to the cytoplasmic vesicle. Its subcellular location is the COPI-coated vesicle membrane. Functionally, the coatomer is a cytosolic protein complex that binds to dilysine motifs and reversibly associates with Golgi non-clathrin-coated vesicles, which further mediate biosynthetic protein transport from the ER, via the Golgi up to the trans Golgi network. Coatomer complex is required for budding from Golgi membranes, and is essential for the retrograde Golgi-to-ER transport of dilysine-tagged proteins. The chain is Coatomer subunit beta from Candida glabrata (strain ATCC 2001 / BCRC 20586 / JCM 3761 / NBRC 0622 / NRRL Y-65 / CBS 138) (Yeast).